Consider the following 677-residue polypeptide: Zinc finger CCCH domain-containing protein 23 (677 aa).

The disordered stretch occupies residues 66 to 117 (PPQAASSSPTVPAAHSPFLLSRQNSGRCPAPSPSSWAQAQPFSRSNSMGNGG). Residues 69 to 82 (AASSSPTVPAAHSP) show a composition bias toward low complexity. The segment covering 98-113 (PSSWAQAQPFSRSNSM) has biased composition (polar residues). A C3H1-type zinc finger spans residues 228 to 255 (GFGWKPCLYYARGFCKNGSTCRFVHGGL). The region spanning 359–435 (RQIYLTFPAD…RVLVKPYKEK (77 aa)) is the RRM domain. A coiled-coil region spans residues 480 to 513 (ANELMLRRKLEEQQQAAELQQAIDLHSRRLIGLQ). Residues 535–562 (TPITNAFTSGQPGATTIVESPPSSTGQL) show a composition bias toward polar residues. Residues 535-607 (TPITNAFTSG…EHNLPDSPFA (73 aa)) form a disordered region. Residues 589–601 (RNADSDQSGEHNL) show a composition bias toward basic and acidic residues.

This is Zinc finger CCCH domain-containing protein 23 from Oryza sativa subsp. japonica (Rice).